Consider the following 78-residue polypeptide: RNA-binding protein KhpA (78 aa).

One can recognise a KH domain in the interval 29 to 78; that stretch reads TIIYELSVAKPDIGKIIGKEGRTIKAIRTLLVSVASRNNVRVSLEIMEEK.

The protein belongs to the KhpA RNA-binding protein family.

Its subcellular location is the cytoplasm. Functionally, a probable RNA-binding protein. The protein is RNA-binding protein KhpA of Chlamydia pneumoniae (Chlamydophila pneumoniae).